A 198-amino-acid polypeptide reads, in one-letter code: MARIATESRTTGETKIQVTLNLDGSGKAQVDTGVGFLDHMLDQIARHGGMDLEIEACGDQHIDDHHTVEDVGITMGQAFRQAIGDRRGITRFGHAYVPLDEALSRVVVDLSNRPSLSWRVKFPTQKVGNFDTELFKEWFAAFAQQGGITMHVESLYGENSHHIAESCFKALARALRSACAVDATLGGVAPSTKGTLSD.

This sequence belongs to the imidazoleglycerol-phosphate dehydratase family.

The protein resides in the cytoplasm. The catalysed reaction is D-erythro-1-(imidazol-4-yl)glycerol 3-phosphate = 3-(imidazol-4-yl)-2-oxopropyl phosphate + H2O. Its pathway is amino-acid biosynthesis; L-histidine biosynthesis; L-histidine from 5-phospho-alpha-D-ribose 1-diphosphate: step 6/9. In Magnetococcus marinus (strain ATCC BAA-1437 / JCM 17883 / MC-1), this protein is Imidazoleglycerol-phosphate dehydratase.